Reading from the N-terminus, the 282-residue chain is S-formylglutathione hydrolase (282 aa).

N-acetylalanine is present on alanine 2. Residue lysine 4 is modified to N6-succinyllysine. Catalysis depends on charge relay system residues serine 149, aspartate 226, and histidine 260.

This sequence belongs to the esterase D family. Homodimer.

It is found in the cytoplasm. It localises to the cytoplasmic vesicle. The catalysed reaction is S-formylglutathione + H2O = formate + glutathione + H(+). Functionally, serine hydrolase involved in the detoxification of formaldehyde. The chain is S-formylglutathione hydrolase (ESD) from Bos taurus (Bovine).